Consider the following 161-residue polypeptide: SsrA-binding protein (161 aa).

A disordered region spans residues 138 to 161; that stretch reads DKRTDSKEKDWNRDKARIMKSSLR. The span at 139-154 shows a compositional bias: basic and acidic residues; sequence KRTDSKEKDWNRDKAR.

This sequence belongs to the SmpB family.

It is found in the cytoplasm. Required for rescue of stalled ribosomes mediated by trans-translation. Binds to transfer-messenger RNA (tmRNA), required for stable association of tmRNA with ribosomes. tmRNA and SmpB together mimic tRNA shape, replacing the anticodon stem-loop with SmpB. tmRNA is encoded by the ssrA gene; the 2 termini fold to resemble tRNA(Ala) and it encodes a 'tag peptide', a short internal open reading frame. During trans-translation Ala-aminoacylated tmRNA acts like a tRNA, entering the A-site of stalled ribosomes, displacing the stalled mRNA. The ribosome then switches to translate the ORF on the tmRNA; the nascent peptide is terminated with the 'tag peptide' encoded by the tmRNA and targeted for degradation. The ribosome is freed to recommence translation, which seems to be the essential function of trans-translation. The protein is SsrA-binding protein of Aliivibrio fischeri (strain MJ11) (Vibrio fischeri).